We begin with the raw amino-acid sequence, 558 residues long: Protein shisa-7 (558 aa).

Positions 1 to 22 (MPALLLLGTVALLASAAGPAGA) are cleaved as a signal peptide. The Extracellular segment spans residues 23–189 (RPSNDTSSVA…GGEGPGGSTA (167 aa)). A glycan (N-linked (GlcNAc...) asparagine) is linked at Asn26. Disordered stretches follow at residues 53–79 (GGSAAGTSANATKTSPASGTGAAARAP) and 142–181 (TPPPLAGGAGGAGGAGGGPGPGQAGWLEGGRAGGAGGRGG). Residues 57 to 77 (AGTSANATKTSPASGTGAAAR) show a composition bias toward low complexity. Over residues 148–181 (GGAGGAGGAGGGPGPGQAGWLEGGRAGGAGGRGG) the composition is skewed to gly residues. Residues 154–175 (GGAGGGPGPGQAGWLEGGRAGG) are GRID. Residues 190 to 210 (YVVCGVISFALAVGVGAKVAF) form a helical membrane-spanning segment. Over 211–558 (SKASRAPRAH…RTASKNEVTV (348 aa)) the chain is Cytoplasmic. The interval 236–263 (QAGPATRPDRARSSSLTPGLGGPDSMAP) is disordered. A Phosphoserine modification is found at Ser438. The interval 443 to 506 (RQSREHLLSP…HHHHALHGSP (64 aa)) is disordered. Pro residues predominate over residues 453 to 462 (PRSPALPPDP). Residues 466–477 (ASLAASHSNLLL) show a composition bias toward low complexity. Thr532 bears the Phosphothreonine mark. A PDZ-binding motif is present at residues 555 to 558 (EVTV).

Belongs to the shisa family. Interacts with GABA(A)R (GABA type A receptor) subunits GABRA1, GABRA2 and GABRG2; the interaction is direct. Does not interact with GABRB2 and GABRB3 subunits. Interacts with AMPAR subunits GRIA1, GRIA2 and GRIA3 and AMPAR auxiliary proteins SHISA6 and SHISA7 in heterologous cells. Interacts (via PDZ-binding motif) with DLG4/PSD-95 (via PDZ domain)in heterologous cells; the interaction is direct. Post-translationally, N-glycosylated. Mainly expressed in neurons. Highly expressed in brain structures including cortex, striatum, olfactory bulb, amygdala hippocampus CA1-3 and dentate gyrus (at protein level).

The protein localises to the postsynaptic density membrane. In terms of biological role, transmembrane protein that regulates gamma-aminobutyric acid type A receptor (GABA(A)R) trafficking, channel deactivation kinetics and pharmacology, necessary for fast inhibitory transmission in the brain. Enhances the action of benzodiazepine, a primary GABA(A)Rs target drug, in the brain. May affect channel kinetics of AMPA-type glutamate receptors (AMPAR), the brain's main excitatory neurotransmitter, necessary for synaptic hippocampal plasticity, and memory recall. May regulate the induction and maintenance of long-term potentiation at Schaffer collaterals/CA3-CA1 excitatory synapses. This Mus musculus (Mouse) protein is Protein shisa-7.